The following is a 381-amino-acid chain: Protein TRIGALACTOSYLDIACYLGLYCEROL 2, chloroplastic (381 aa).

The N-terminal 45 residues, 1–45 (MIGNPVIQVPSSLMPSSSMIACPRVSPNGVPYLPPKPRTRHLVVR), are a transit peptide targeting the chloroplast. The Stromal portion of the chain corresponds to 46 to 96 (AASNSDAAHGQPSSDGGKNPLTVVLDVPRNIWRQTLKPLSDFGFGKRSIWE). Residues 97–117 (GGVGLFIVSGATLLALSWAWL) form a helical membrane-spanning segment. Over 118–381 (RGFQMRSKFR…LLIKSLSRLL (264 aa)) the chain is Chloroplast intermembrane.

In terms of assembly, homomultimer. Substrate-binding subunit of the TGD complex, a lipid translocator at the inner chloroplast envelope membrane made of TGD1, TGD2 and TGD3. Interacts with TGD1 and TGD3 with an overall subunit stoichiometry of 2 TGD1, 2 TGD3 and 8 to 12 TGD2. Interacts with TGD5.

The protein localises to the plastid. Its subcellular location is the chloroplast inner membrane. Its function is as follows. Component of a phosphatidic acid/lipid transport complex in the chloroplast envelope. Specifically binds phosphatidic acid (PA). Involved in lipid transfer from the endoplasmic reticulum (ER) to plastids, and necessary for thylakoids formation. This is Protein TRIGALACTOSYLDIACYLGLYCEROL 2, chloroplastic from Arabidopsis thaliana (Mouse-ear cress).